The following is an 853-amino-acid chain: Aryl hydrocarbon receptor (853 aa).

A propeptide spanning residues 1–9 (MSSGANITY) is cleaved from the precursor. The tract at residues 1 to 38 (MSSGANITYASRKRRKPVQKTVKPVPAEGIKSNPSKRH) is disordered. 2 short sequence motifs (nuclear localization signal) span residues 12–15 (RKRR) and 36–41 (KRHRDR). The region spanning 26 to 79 (PAEGIKSNPSKRHRDRLNTELDRLASLLPFPQDVINKLDKLSVLRLSVSYLRAK) is the bHLH domain. The tract at residues 37-65 (RHRDRLNTELDRLASLLPFPQDVINKLDK) is DNA-binding. Required for maintaining the overall integrity of the AHR:ARNT heterodimer and its transcriptional activity regions lie at residues 49 to 81 (LASL…AKSF), 116 to 124 (LLQALNGFV), and 264 to 266 (FAI). Residues 63–71 (LDKLSVLRL) carry the Nuclear export signal motif. One can recognise a PAS 1 domain in the interval 116 to 179 (LLQALNGFVL…RQLHWALNPS (64 aa)). Residues 273–340 (PSILEIRTKN…CAESHIRMIK (68 aa)) form the PAS 2 domain. A PAC domain is found at 346–384 (MTVFRLLAKHSRWRWVQSNARLIYRNGRPDYIIATQRPL). The tract at residues 429–451 (TKSNTSRKDWAPQSTPSKDSFHP) is disordered. Residues 440-451 (PQSTPSKDSFHP) show a composition bias toward polar residues.

In terms of assembly, homodimer. Heterodimer; efficient DNA binding requires dimerization with another bHLH protein. Interacts with ARNT; the heterodimer ARNT:AHR binds to core DNA sequence 5'-TGCGTG-3' within the dioxin response element (DRE) of target gene promoters and activates their transcription. Binds MYBBP1A. Interacts with coactivators including SRC-1, RIP140 and NOCA7, and with the corepressor SMRT. Interacts with NEDD8 and IVNS1ABP. Interacts with BMAL1. Interacts with HSP90AB1. Interacts with TIPARP; leading to mono-ADP-ribosylation of AHR and subsequent inhibition of AHR. In terms of processing, mono-ADP-ribosylated, leading to inhibit transcription activator activity of AHR. As to expression, expressed in all tissues tested including brain, heart, kidney, liver, lung, spleen, skeletal muscle and thymus.

It localises to the cytoplasm. It is found in the nucleus. Functionally, ligand-activated transcription factor that enables cells to adapt to changing conditions by sensing compounds from the environment, diet, microbiome and cellular metabolism, and which plays important roles in development, immunity and cancer. Upon ligand binding, translocates into the nucleus, where it heterodimerizes with ARNT and induces transcription by binding to xenobiotic response elements (XRE). Regulates a variety of biological processes, including angiogenesis, hematopoiesis, drug and lipid metabolism, cell motility and immune modulation. Xenobiotics can act as ligands: upon xenobiotic-binding, activates the expression of multiple phase I and II xenobiotic chemical metabolizing enzyme genes (such as the CYP1A1 gene). Mediates biochemical and toxic effects of halogenated aromatic hydrocarbons. Next to xenobiotics, natural ligands derived from plants, microbiota, and endogenous metabolism are potent AHR agonists. Tryptophan (Trp) derivatives constitute an important class of endogenous AHR ligands. Acts as a negative regulator of anti-tumor immunity: indoles and kynurenic acid generated by Trp catabolism act as ligand and activate AHR, thereby promoting AHR-driven cancer cell motility and suppressing adaptive immunity. Regulates the circadian clock by inhibiting the basal and circadian expression of the core circadian component PER1. Inhibits PER1 by repressing the CLOCK-BMAL1 heterodimer mediated transcriptional activation of PER1. The heterodimer ARNT:AHR binds to core DNA sequence 5'-TGCGTG-3' within the dioxin response element (DRE) of target gene promoters and activates their transcription. The chain is Aryl hydrocarbon receptor (Ahr) from Rattus norvegicus (Rat).